Consider the following 446-residue polypeptide: T-box transcription factor TBX20 (446 aa).

The disordered stretch occupies residues 50-80 (SCHPNLGDLPPLETHSDFSSGGGTGSGAPLC). Residues 108–287 (LWDKFHELGT…SNPFAKGFRD (180 aa)) constitute a DNA-binding region (T-box).

It is found in the nucleus. Functionally, transcriptional regulator that may play a very early role in the differentiation of the cardiac precursors. In Danio rerio (Zebrafish), this protein is T-box transcription factor TBX20 (tbx20).